The sequence spans 184 residues: Lactoylglutathione lyase (184 aa).

A2 bears the N-acetylalanine mark. A disulfide bond links C19 and C20. Residues 31 to 177 enclose the VOC domain; it reads LLQQTMLRVK…DGYWIEILNP (147 aa). Q34 and R38 together coordinate substrate. Position 34 (Q34) interacts with Zn(2+). C61 and C139 are joined by a disulfide. K88 bears the N6-succinyllysine mark. E100 contributes to the Zn(2+) binding site. A substrate-binding site is contributed by N104. T107 carries the phosphothreonine modification. The substrate site is built by R123 and H127. H127 contacts Zn(2+). At C139 the chain carries S-glutathionyl cysteine; alternate. K148 is modified (N6-acetyllysine; alternate). K148 carries the N6-succinyllysine; alternate modification. 157-158 is a binding site for substrate; sequence KM. E173 provides a ligand contact to Zn(2+). The Proton donor/acceptor role is filled by E173.

Belongs to the glyoxalase I family. In terms of assembly, homodimer. The cofactor is Zn(2+). Glutathionylation at Cys-139 inhibits enzyme activity. In terms of processing, phosphorylated at Thr-107 in the presence of CaMK2. However, this is a consensus site for phosphorylation by CK2 so phosphorylation may be mediated by CK2 rather than CaMK2. Phosphorylation is induced by TNF and suppresses the TNF-induced transcriptional activity of NF-kappa-B. Post-translationally, exists in a nitric oxide (NO)-modified form. The exact nature of the modification is unknown, but it suppresses the TNF-induced transcriptional activity of NF-kappa-B.

It carries out the reaction (R)-S-lactoylglutathione = methylglyoxal + glutathione. Its pathway is secondary metabolite metabolism; methylglyoxal degradation; (R)-lactate from methylglyoxal: step 1/2. With respect to regulation, regulated by oxidation of Cys-139 in response to the redox state of the cell. Results in the alternative formation of cystine or glutathione-bound cysteine, the latter modification leading to reduced enzyme activity. Functionally, catalyzes the conversion of hemimercaptal, formed from methylglyoxal and glutathione, to S-lactoylglutathione. Involved in the regulation of TNF-induced transcriptional activity of NF-kappa-B. Required for normal osteoclastogenesis. The chain is Lactoylglutathione lyase (GLO1) from Homo sapiens (Human).